A 335-amino-acid chain; its full sequence is Ketol-acid reductoisomerase (NADP(+)) (335 aa).

The region spanning 2–182 is the KARI N-terminal Rossmann domain; it reads VEMFYDKDAD…GCTRAGVIET (181 aa). NADP(+) is bound by residues 25–28, Arg-48, Ser-51, and 83–86; these read YGSQ and DEIQ. Residue His-108 is part of the active site. Gly-134 lines the NADP(+) pocket. Positions 183-328 constitute a KARI C-terminal knotted domain; the sequence is TFREETETDL…KKLRAMMPWL (146 aa). Residues Asp-191, Glu-195, Glu-227, and Glu-231 each contribute to the Mg(2+) site. Ser-252 is a substrate binding site.

It belongs to the ketol-acid reductoisomerase family. The cofactor is Mg(2+).

The catalysed reaction is (2R)-2,3-dihydroxy-3-methylbutanoate + NADP(+) = (2S)-2-acetolactate + NADPH + H(+). It carries out the reaction (2R,3R)-2,3-dihydroxy-3-methylpentanoate + NADP(+) = (S)-2-ethyl-2-hydroxy-3-oxobutanoate + NADPH + H(+). Its pathway is amino-acid biosynthesis; L-isoleucine biosynthesis; L-isoleucine from 2-oxobutanoate: step 2/4. It functions in the pathway amino-acid biosynthesis; L-valine biosynthesis; L-valine from pyruvate: step 2/4. Functionally, involved in the biosynthesis of branched-chain amino acids (BCAA). Catalyzes an alkyl-migration followed by a ketol-acid reduction of (S)-2-acetolactate (S2AL) to yield (R)-2,3-dihydroxy-isovalerate. In the isomerase reaction, S2AL is rearranged via a Mg-dependent methyl migration to produce 3-hydroxy-3-methyl-2-ketobutyrate (HMKB). In the reductase reaction, this 2-ketoacid undergoes a metal-dependent reduction by NADPH to yield (R)-2,3-dihydroxy-isovalerate. This Methanococcoides burtonii (strain DSM 6242 / NBRC 107633 / OCM 468 / ACE-M) protein is Ketol-acid reductoisomerase (NADP(+)).